The chain runs to 157 residues: MKIVLLVVGKTDSKLMVQATEEYIRRLSHYVSFEVEVIPDVRLGSKLSSEQQKDAEGREILARLRPSDSTVLLDERGREYSSMEFSAFLQKKMLIGTRRMVFVIGGPYGFSPAVQEAVTDRISLSRMTFSHQMIRLFFTEQVYRAMTILNHEPYHHE.

S-adenosyl-L-methionine-binding positions include L73, G105, and 124–129 (LSRMTF).

This sequence belongs to the RNA methyltransferase RlmH family. As to quaternary structure, homodimer.

The protein localises to the cytoplasm. The catalysed reaction is pseudouridine(1915) in 23S rRNA + S-adenosyl-L-methionine = N(3)-methylpseudouridine(1915) in 23S rRNA + S-adenosyl-L-homocysteine + H(+). Its function is as follows. Specifically methylates the pseudouridine at position 1915 (m3Psi1915) in 23S rRNA. The chain is Ribosomal RNA large subunit methyltransferase H from Porphyromonas gingivalis (strain ATCC BAA-308 / W83).